We begin with the raw amino-acid sequence, 621 residues long: Kelch-like protein 40 (621 aa).

One can recognise a BTB domain in the interval 33–98 (LDCVVRAGER…LYTSEIALDE (66 aa)). The BACK domain maps to 133–239 (CLAVFRLGLL…PRAFLESRVE (107 aa)). Positions 265–295 (ITTLRKKKKGKDGAGAKEADKGTSKAKAEED) are disordered. Over residues 275–292 (KDGAGAKEADKGTSKAKA) the composition is skewed to basic and acidic residues. Kelch repeat units follow at residues 360–412 (QVFV…EALN), 413–462 (SIYV…SHMD), 463–510 (LVYV…VHDG), 512–557 (IIVA…SLVG), and 559–613 (LYAI…PVRL).

It belongs to the KLHL40 family. Component of the BCR(KLHL40) E3 ubiquitin ligase complex, at least composed of CUL3, KLHL40 and RBX1. Interacts with LMOD3. In terms of tissue distribution, highly expressed in fetal (19, 23 and 31 weeks of gestation) and adult skeletal muscle; expression levels tend to be higher in fetal compared to postnatal muscles (at protein level). Also expressed in fetal and adult heart.

The protein resides in the cytoplasm. Its subcellular location is the myofibril. The protein localises to the sarcomere. It localises to the a band. It is found in the i band. In terms of biological role, substrate-specific adapter of a BCR (BTB-CUL3-RBX1) E3 ubiquitin ligase complex that acts as a key regulator of skeletal muscle development. The BCR(KLHL40) complex acts by mediating ubiquitination and degradation of TFDP1, thereby regulating the activity of the E2F:DP transcription factor complex. Promotes stabilization of LMOD3 by acting as a negative regulator of LMOD3 ubiquitination; the molecular process by which it negatively regulates ubiquitination of LMOD3 is however unclear. The sequence is that of Kelch-like protein 40 from Homo sapiens (Human).